The primary structure comprises 217 residues: Large ribosomal subunit protein bL21m (217 aa).

A compositionally biased stretch (low complexity) spans 61 to 81 (PPKVTTATTPEAPAAVPTSTP). The disordered stretch occupies residues 61 to 87 (PPKVTTATTPEAPAAVPTSTPFSQQPP).

The protein belongs to the bacterial ribosomal protein bL21 family. Component of the mitochondrial large ribosomal subunit (mt-LSU). Mature N.crassa 74S mitochondrial ribosomes consist of a small (37S) and a large (54S) subunit. The 37S small subunit contains a 16S ribosomal RNA (16S mt-rRNA) and 32 different proteins. The 54S large subunit contains a 23S rRNA (23S mt-rRNA) and 42 different proteins.

It is found in the mitochondrion. In terms of biological role, component of the mitochondrial ribosome (mitoribosome), a dedicated translation machinery responsible for the synthesis of mitochondrial genome-encoded proteins, including at least some of the essential transmembrane subunits of the mitochondrial respiratory chain. The mitoribosomes are attached to the mitochondrial inner membrane and translation products are cotranslationally integrated into the membrane. The protein is Large ribosomal subunit protein bL21m (mrpl49) of Neurospora crassa (strain ATCC 24698 / 74-OR23-1A / CBS 708.71 / DSM 1257 / FGSC 987).